The chain runs to 185 residues: Peptidyl-tRNA hydrolase (185 aa).

TRNA is bound at residue Tyr14. His19 serves as the catalytic Proton acceptor. Residues Tyr65, Asn67, and Asn113 each coordinate tRNA.

The protein belongs to the PTH family. Monomer.

It localises to the cytoplasm. The catalysed reaction is an N-acyl-L-alpha-aminoacyl-tRNA + H2O = an N-acyl-L-amino acid + a tRNA + H(+). Hydrolyzes ribosome-free peptidyl-tRNAs (with 1 or more amino acids incorporated), which drop off the ribosome during protein synthesis, or as a result of ribosome stalling. Functionally, catalyzes the release of premature peptidyl moieties from peptidyl-tRNA molecules trapped in stalled 50S ribosomal subunits, and thus maintains levels of free tRNAs and 50S ribosomes. The chain is Peptidyl-tRNA hydrolase from Rickettsia typhi (strain ATCC VR-144 / Wilmington).